The following is a 431-amino-acid chain: Glutamyl-tRNA(Gln) amidotransferase subunit A (431 aa).

Active-site charge relay system residues include Lys-55 and Ser-130. Ser-154 acts as the Acyl-ester intermediate in catalysis.

Belongs to the amidase family. GatA subfamily. Heterotrimer of A, B and C subunits.

It carries out the reaction L-glutamyl-tRNA(Gln) + L-glutamine + ATP + H2O = L-glutaminyl-tRNA(Gln) + L-glutamate + ADP + phosphate + H(+). Its function is as follows. Allows the formation of correctly charged Gln-tRNA(Gln) through the transamidation of misacylated Glu-tRNA(Gln) in organisms which lack glutaminyl-tRNA synthetase. The reaction takes place in the presence of glutamine and ATP through an activated gamma-phospho-Glu-tRNA(Gln). The protein is Glutamyl-tRNA(Gln) amidotransferase subunit A of Methanococcus maripaludis (strain C6 / ATCC BAA-1332).